Reading from the N-terminus, the 998-residue chain is Regulator of telomere elongation helicase 1 homolog (998 aa).

In terms of domain architecture, Helicase ATP-binding spans 7-324 (AGIPVHFPFE…KEMLLELEKA (318 aa)). 42-49 (SPTGTGKT) is an ATP binding site. [4Fe-4S] cluster-binding residues include cysteine 148, cysteine 166, cysteine 175, and cysteine 211. A DEAH box motif is present at residues 254–257 (DEAH). The tract at residues 426 to 454 (QNAGKPAPKQQQQGGWLGKGNNTSNSSSS) is disordered. Threonine 887 carries the post-translational modification Phosphothreonine.

It belongs to the helicase family. RAD3/XPD subfamily.

The protein resides in the nucleus. It carries out the reaction ATP + H2O = ADP + phosphate + H(+). In terms of biological role, a probable ATP-dependent DNA helicase implicated in DNA repair and the maintenance of genomic stability. Acts as an anti-recombinase to counteract toxic recombination and limit crossover during meiosis. Regulates meiotic recombination and crossover homeostasis by physically dissociating strand invasion events and thereby promotes noncrossover repair by meiotic synthesis dependent strand annealing (SDSA) as well as disassembly of D loop recombination intermediates. This Drosophila willistoni (Fruit fly) protein is Regulator of telomere elongation helicase 1 homolog.